Reading from the N-terminus, the 231-residue chain is NADH-quinone oxidoreductase subunit C (231 aa).

The protein belongs to the complex I 30 kDa subunit family. In terms of assembly, NDH-1 is composed of 14 different subunits. Subunits NuoB, C, D, E, F, and G constitute the peripheral sector of the complex.

It is found in the cell membrane. The enzyme catalyses a quinone + NADH + 5 H(+)(in) = a quinol + NAD(+) + 4 H(+)(out). In terms of biological role, NDH-1 shuttles electrons from NADH, via FMN and iron-sulfur (Fe-S) centers, to quinones in the respiratory chain. The immediate electron acceptor for the enzyme in this species is believed to be a menaquinone. Couples the redox reaction to proton translocation (for every two electrons transferred, four hydrogen ions are translocated across the cytoplasmic membrane), and thus conserves the redox energy in a proton gradient. The chain is NADH-quinone oxidoreductase subunit C from Mycobacterium sp. (strain JLS).